A 228-amino-acid polypeptide reads, in one-letter code: Urease accessory protein UreF 1 (228 aa).

This sequence belongs to the UreF family. UreD, UreF and UreG form a complex that acts as a GTP-hydrolysis-dependent molecular chaperone, activating the urease apoprotein by helping to assemble the nickel containing metallocenter of UreC. The UreE protein probably delivers the nickel.

The protein resides in the cytoplasm. Its function is as follows. Required for maturation of urease via the functional incorporation of the urease nickel metallocenter. The chain is Urease accessory protein UreF 1 from Brucella canis (strain ATCC 23365 / NCTC 10854 / RM-666).